The following is a 368-amino-acid chain: D-alanine--D-alanine ligase (368 aa).

Residues 141 to 350 form the ATP-grasp domain; it reads KMIWDYSGLP…YNELIMHLIE (210 aa). An ATP-binding site is contributed by 176 to 231; that stretch reads EKDLEYPLFIKPCRAGSSVGAGMVKNRNELLEQAEESFLWDNKILVEACIEAREVE. Residues Asp303, Glu317, and Asn319 each contribute to the Mg(2+) site.

The protein belongs to the D-alanine--D-alanine ligase family. Requires Mg(2+) as cofactor. Mn(2+) is required as a cofactor.

Its subcellular location is the cytoplasm. The enzyme catalyses 2 D-alanine + ATP = D-alanyl-D-alanine + ADP + phosphate + H(+). Its pathway is cell wall biogenesis; peptidoglycan biosynthesis. Functionally, cell wall formation. This Treponema denticola (strain ATCC 35405 / DSM 14222 / CIP 103919 / JCM 8153 / KCTC 15104) protein is D-alanine--D-alanine ligase.